The following is a 193-amino-acid chain: Peptidyl-tRNA hydrolase (193 aa).

Tyr14 lines the tRNA pocket. His19 acts as the Proton acceptor in catalysis. Residues Phe64, Asn66, and Asn112 each coordinate tRNA.

This sequence belongs to the PTH family. Monomer.

The protein resides in the cytoplasm. It carries out the reaction an N-acyl-L-alpha-aminoacyl-tRNA + H2O = an N-acyl-L-amino acid + a tRNA + H(+). Its function is as follows. Hydrolyzes ribosome-free peptidyl-tRNAs (with 1 or more amino acids incorporated), which drop off the ribosome during protein synthesis, or as a result of ribosome stalling. Functionally, catalyzes the release of premature peptidyl moieties from peptidyl-tRNA molecules trapped in stalled 50S ribosomal subunits, and thus maintains levels of free tRNAs and 50S ribosomes. This Bartonella quintana (strain Toulouse) (Rochalimaea quintana) protein is Peptidyl-tRNA hydrolase.